Reading from the N-terminus, the 193-residue chain is dTTP/UTP pyrophosphatase (193 aa).

The active-site Proton acceptor is the aspartate 77.

Belongs to the Maf family. YhdE subfamily. A divalent metal cation is required as a cofactor.

Its subcellular location is the cytoplasm. The enzyme catalyses dTTP + H2O = dTMP + diphosphate + H(+). It carries out the reaction UTP + H2O = UMP + diphosphate + H(+). Nucleoside triphosphate pyrophosphatase that hydrolyzes dTTP and UTP. May have a dual role in cell division arrest and in preventing the incorporation of modified nucleotides into cellular nucleic acids. This is dTTP/UTP pyrophosphatase from Phocaeicola vulgatus (strain ATCC 8482 / DSM 1447 / JCM 5826 / CCUG 4940 / NBRC 14291 / NCTC 11154) (Bacteroides vulgatus).